The sequence spans 500 residues: UDP-N-acetylmuramoyl-L-alanyl-D-glutamate--2,6-diaminopimelate ligase (500 aa).

Residue serine 38 coordinates UDP-N-acetyl-alpha-D-muramoyl-L-alanyl-D-glutamate. An ATP-binding site is contributed by 118 to 124 (GTNGKTS). Residues 160-161 (TT), serine 187, and arginine 195 contribute to the UDP-N-acetyl-alpha-D-muramoyl-L-alanyl-D-glutamate site. Lysine 227 bears the N6-carboxylysine mark. Meso-2,6-diaminopimelate is bound by residues arginine 395, 419-422 (DNPR), glycine 471, and glutamate 475. A Meso-diaminopimelate recognition motif motif is present at residues 419–422 (DNPR).

This sequence belongs to the MurCDEF family. MurE subfamily. It depends on Mg(2+) as a cofactor. Post-translationally, carboxylation is probably crucial for Mg(2+) binding and, consequently, for the gamma-phosphate positioning of ATP.

The protein localises to the cytoplasm. The catalysed reaction is UDP-N-acetyl-alpha-D-muramoyl-L-alanyl-D-glutamate + meso-2,6-diaminopimelate + ATP = UDP-N-acetyl-alpha-D-muramoyl-L-alanyl-gamma-D-glutamyl-meso-2,6-diaminopimelate + ADP + phosphate + H(+). It participates in cell wall biogenesis; peptidoglycan biosynthesis. Functionally, catalyzes the addition of meso-diaminopimelic acid to the nucleotide precursor UDP-N-acetylmuramoyl-L-alanyl-D-glutamate (UMAG) in the biosynthesis of bacterial cell-wall peptidoglycan. This chain is UDP-N-acetylmuramoyl-L-alanyl-D-glutamate--2,6-diaminopimelate ligase, found in Leptospira borgpetersenii serovar Hardjo-bovis (strain L550).